The primary structure comprises 861 residues: Glucans biosynthesis glucosyltransferase H (861 aa).

The next 6 helical transmembrane spans lie at 142 to 162 (FILLLLMLAQTSVATYYMKGI), 188 to 208 (VLPYVIQFGILALFAILFCWV), 516 to 536 (VFLTGVMSYLSAPLWFFFLVL), 573 to 593 (LFSTTLTLLFLPKLLSVMLIW), 600 to 620 (FGGVIRVTLSMLLEMFFSVLL), and 683 to 703 (FLWWLSPIVGSLILSIPVSVI).

This sequence belongs to the glycosyltransferase 2 family. OpgH subfamily.

It is found in the cell inner membrane. Its pathway is glycan metabolism; osmoregulated periplasmic glucan (OPG) biosynthesis. Functionally, involved in the biosynthesis of osmoregulated periplasmic glucans (OPGs). The sequence is that of Glucans biosynthesis glucosyltransferase H from Pseudomonas aeruginosa (strain LESB58).